The primary structure comprises 286 residues: Puff II/9-1 protein (286 aa).

The N-terminal stretch at 1-19 (MKQFIVLTVVLLAIQELQG) is a signal peptide. The segment at 61-235 (ITAIKKDNDF…ENALNTLRCE (175 aa)) is helical. N-linked (GlcNAc...) asparagine glycosylation is present at asparagine 156.

The protein is Puff II/9-1 protein (II/9-1) of Bradysia coprophila (Dark-winged fungus gnat).